The sequence spans 376 residues: Alanine racemase (376 aa).

K36 serves as the catalytic Proton acceptor; specific for D-alanine. K36 is modified (N6-(pyridoxal phosphate)lysine). R134 contributes to the substrate binding site. Y266 serves as the catalytic Proton acceptor; specific for L-alanine. Residue M314 participates in substrate binding.

Belongs to the alanine racemase family. Requires pyridoxal 5'-phosphate as cofactor.

It catalyses the reaction L-alanine = D-alanine. It participates in amino-acid biosynthesis; D-alanine biosynthesis; D-alanine from L-alanine: step 1/1. In terms of biological role, catalyzes the interconversion of L-alanine and D-alanine. May also act on other amino acids. The sequence is that of Alanine racemase (alr) from Nitratidesulfovibrio vulgaris (strain DP4) (Desulfovibrio vulgaris).